The following is a 371-amino-acid chain: uncharacterized protein (371 aa).

A helical membrane pass occupies residues 17–33 (FLLFSVVLIIVMTTLVF).

This sequence to S.pombe SpBC4C3.08 and SpBC4C3.09.

The protein resides in the membrane. This is an uncharacterized protein from Schizosaccharomyces pombe (strain 972 / ATCC 24843) (Fission yeast).